The primary structure comprises 540 residues: Sesquiterpene synthase 15b (540 aa).

Residues D292, D296, and E445 each contribute to the Mg(2+) site. A DDXXD motif motif is present at residues 292 to 296 (DDIYD).

This sequence belongs to the terpene synthase family. Tpsa subfamily. Mg(2+) serves as cofactor. It depends on Mn(2+) as a cofactor.

It catalyses the reaction (2E,6E)-farnesyl diphosphate = germacrene A + diphosphate. Its pathway is secondary metabolite biosynthesis; terpenoid biosynthesis. Sesquiterpene synthase involved in the biosynthesis of volatile compounds. Mediates the conversion of (2E,6E)-farnesyl diphosphate (FPP) into germacrene A. The chain is Sesquiterpene synthase 15b from Solanum habrochaites (Wild tomato).